The following is a 591-amino-acid chain: Protein enabled homolog (591 aa).

In terms of domain architecture, WH1 spans 1 to 111; it reads MSEQSICQAR…SAMMHALEVL (111 aa). Residues 115-136 show a composition bias toward polar residues; it reads ETGPTLPRQNSQLPAQVQNGPS. The disordered stretch occupies residues 115-146; that stretch reads ETGPTLPRQNSQLPAQVQNGPSQEELEIQRRQ. S125 carries the phosphoserine modification. Residues 135 to 265 are a coiled coil; it reads PSQEELEIQR…LEWERERRIS (131 aa). 9 tandem repeats follow at residues 156–160, 161–165, 166–170, 171–175, 176–180, 181–185, 186–190, 191–195, and 196–200. Positions 156-200 are 9 X 5 AA tandem repeats of [LMQ]-E-[QR]-E-[QR]; the sequence is LERERLERERMERERLERERLERERLERERLEQEQLERERQERER. The segment covering 221–264 has biased composition (basic and acidic residues); that stretch reads RLDRERQERQERERLERLERERQERERQEQLEREQLEWERERRI. A disordered region spans residues 221–379; the sequence is RLDRERQERQ…PPLPASGFFL (159 aa). S265 carries the post-translational modification Phosphoserine; by PKA. The segment covering 275–305 has biased composition (polar residues); it reads TPLNSVLGDSSASEPGLQAASQPAETPSQQG. 2 stretches are compositionally biased toward pro residues: residues 311-323 and 330-373; these read LAPP…PPGP and LPPP…PPLP. The interval 391–411 is EVH2 block A; that stretch reads GLAAAIAGAKLRKVSRMEDTS. An EVH2 region spans residues 391–588; sequence GLAAAIAGAK…DAIRQELSKS (198 aa). The KLKR signature appears at 400-403; sequence KLRK. A disordered region spans residues 405 to 549; it reads SRMEDTSFPS…LSQPSANGVQ (145 aa). The span at 432 to 443 shows a compositional bias: gly residues; it reads RGNGPLPLGGSG. The EVH2 block B stretch occupies residues 442–459; the sequence is SGLMEEMSALLARRRRIA. I465 carries the phosphothreonine modification. Residues E471 and E475 each carry the phosphoserine modification. Polar residues-rich tracts occupy residues 479 to 491 and 499 to 509; these read PVTS…STPE and RTNTMNGSKSP. At T502 the chain carries Phosphothreonine. S506, S508, and S512 each carry phosphoserine. A compositionally biased stretch (polar residues) spans 538–549; the sequence is TPLSQPSANGVQ. The interval 554–588 is EVH2 block C; it reads DYDRLKQDILDEMRKELTKLKEELIDAIRQELSKS. The stretch at 557-587 forms a coiled coil; sequence RLKQDILDEMRKELTKLKEELIDAIRQELSK.

Belongs to the Ena/VASP family. As to quaternary structure, homotetramer. Interacts with APBB1IP, APBB1, PFN1 and ROBO4. Isoforms, containing the polyproline-rich regions with PPLP motifs, bind the WW domain of APBB1IP. Isoforms, containing the PPSY motif, bind, in vitro, to the WW2 and WW3 domains of NEDD4 and to the WW1 domain of YAP1. Binds the SH3 domain of BAIAP2-alpha but only after the autoinhibitory region of BAIAP2-alpha has been blocked by interaction with CDC42. Interacts, via the EVH1/WH1 domain, with the Pro-rich domains from VCL, ZYX and Listeria monocytogenes actA and with TES (via LIM domains). The TES LIM domain and the Pro-rich domains from VCL or ZYX compete for the same binding site. Interaction with ZYX is important for targeting ENAH to focal adhesions and enhances production of actin-rich structures at the apical surface of cells. Interacts, through the Pro-rich region, with the C-terminal SH3 domain of DNMPB. Binds GPHN. Interacts with FAT1 (via EVH1 domains). Heterotrimer with TES and ACTL7A. Interacts with PRPF40A. In terms of processing, NTN1-induced PKA phosphorylation on Ser-265 directly parallels the formation of filopodial protrusions. Expressed in myoepithelia of parotid, breast, bronchial glands and sweat glands. Expressed in colon-rectum muscolaris mucosae epithelium, pancreas acinar ductal epithelium, endometrium epithelium, prostate fibromuscolar stroma and placenta vascular media. Overexpressed in a majority of breast cancer cell lines and primary breast tumor lesions.

The protein localises to the cytoplasm. Its subcellular location is the cytoskeleton. The protein resides in the cell projection. It is found in the lamellipodium. It localises to the filopodium. The protein localises to the synapse. Its subcellular location is the cell junction. The protein resides in the focal adhesion. Ena/VASP proteins are actin-associated proteins involved in a range of processes dependent on cytoskeleton remodeling and cell polarity such as axon guidance and lamellipodial and filopodial dynamics in migrating cells. ENAH induces the formation of F-actin rich outgrowths in fibroblasts. Acts synergistically with BAIAP2-alpha and downstream of NTN1 to promote filipodia formation. This Homo sapiens (Human) protein is Protein enabled homolog (ENAH).